The sequence spans 244 residues: Octanoyltransferase (244 aa).

Positions 1–21 (MDKKLHSVSPESGPNSNLDLT) are disordered. Positions 9-21 (SPESGPNSNLDLT) are enriched in polar residues. The BPL/LPL catalytic domain occupies 59 to 244 (PFSPQAVWLL…LNWEKINQSL (186 aa)). Substrate is bound by residues 101–108 (RGGEVTHH), 168–170 (SIG), and 181–183 (GFS). Residue C199 is the Acyl-thioester intermediate of the active site.

The protein belongs to the LipB family.

It is found in the cytoplasm. The enzyme catalyses octanoyl-[ACP] + L-lysyl-[protein] = N(6)-octanoyl-L-lysyl-[protein] + holo-[ACP] + H(+). It participates in protein modification; protein lipoylation via endogenous pathway; protein N(6)-(lipoyl)lysine from octanoyl-[acyl-carrier-protein]: step 1/2. Functionally, catalyzes the transfer of endogenously produced octanoic acid from octanoyl-acyl-carrier-protein onto the lipoyl domains of lipoate-dependent enzymes. Lipoyl-ACP can also act as a substrate although octanoyl-ACP is likely to be the physiological substrate. This Prochlorococcus marinus (strain NATL1A) protein is Octanoyltransferase.